A 64-amino-acid polypeptide reads, in one-letter code: Fatty acid-binding protein (64 aa).

This sequence belongs to the calycin superfamily. Fatty-acid binding protein (FABP) family.

Its subcellular location is the cytoplasm. FABPs are thought to play a role in the intracellular transport of long-chain fatty acids and their acyl-CoA esters. The polypeptide is Fatty acid-binding protein (Acarus siro (Flour mite)).